The primary structure comprises 851 residues: DNA mismatch repair protein MutS (851 aa).

614-621 serves as a coordination point for ATP; the sequence is GPNMGGKS.

It belongs to the DNA mismatch repair MutS family.

Functionally, this protein is involved in the repair of mismatches in DNA. It is possible that it carries out the mismatch recognition step. This protein has a weak ATPase activity. The polypeptide is DNA mismatch repair protein MutS (Photorhabdus laumondii subsp. laumondii (strain DSM 15139 / CIP 105565 / TT01) (Photorhabdus luminescens subsp. laumondii)).